Consider the following 466-residue polypeptide: MRYRRSTRHKRASATQLYQTCKASGTCPPDVIPKVEGTTIADQLLKYGSLGVFFGGLGIGTGAGSGGRAGYVPLSTRPPTSSITTSTIRPPVTVEPIGPLEPSIVSMIEETTFIESGAPAPSIPSATGFDVTTSANNTPAIINVTSIGESSVQSVSTHLNPTFTEPSIIQPPAPAEASGHVLFSSPTISTHTYEEIPMDTFVTSTDSSSVTSSTPIPGSRPTTRLGLYSRATQQVKVVDPAFMSSPQKLVTYNNPVFEGVDTDETIIFDRSQLLPAPDPDFLDIIALHRPALTSRRGTVRFSRLGNKATLRTRSGKQIGARVHYYHDISPIQPAEVQEDIELQPLLPQSVSPYTINDGLYDVYADSLQQPTFHLPSTLSTHNNTFTVPINSGIDFVYQPTMSIESGPDIPLPSLPTHTPFVPIAPTAPSTSIIVDGTDFILHPSYFLLRRRRKRFPYFFTDVRVAA.

The Nuclear localization signal motif lies at 1–12 (MRYRRSTRHKRA). Cysteines 21 and 27 form a disulfide. 2 stretches are compositionally biased toward low complexity: residues 74–94 (LSTR…PVTV) and 203–214 (TSTDSSSVTSST). 2 disordered regions span residues 74-95 (LSTR…VTVE) and 203-224 (TSTD…PTTR). Positions 447-455 (LLRRRRKRF) match the Nuclear localization signal motif.

It belongs to the papillomaviridae L2 protein family. In terms of assembly, interacts with major capsid protein L1. Interacts with E2; this interaction inhibits E2 transcriptional activity but not the DNA replication function E2. Interacts with host GADD45GIP1. Interacts with host HSPA8; this interaction is required for L2 nuclear translocation. Interacts with host importins KPNB2 and KPNB3. Forms a complex with importin alpha2-beta1 heterodimers via interaction with the importin alpha2 adapter. Interacts with host DYNLT1; this interaction is essential for virus intracellular transport during entry. Interacts (via C-terminus) with host retromer subunits VPS35 and VPS29. In terms of processing, highly phosphorylated.

It is found in the virion. Its subcellular location is the host nucleus. It localises to the host early endosome. The protein resides in the host Golgi apparatus. Functionally, minor protein of the capsid that localizes along the inner surface of the virion, within the central cavities beneath the L1 pentamers. Plays a role in capsid stabilization through interaction with the major capsid protein L1. Once the virion enters the host cell, L2 escorts the genomic DNA into the nucleus by promoting escape from the endosomal compartments and traffic through the host Golgi network. Mechanistically, the C-terminus of L2 possesses a cell-penetrating peptide that protudes from the host endosome, interacts with host cytoplasmic retromer cargo and thereby mediates the capsid delivery to the host trans-Golgi network. Plays a role through its interaction with host dynein in the intracellular microtubule-dependent transport of viral capsid toward the nucleus. Mediates the viral genome import into the nucleus through binding to host importins. Once within the nucleus, L2 localizes viral genomes to host PML bodies in order to activate early gene expression for establishment of infection. Later on, promotes late gene expression by interacting with the viral E2 protein and by inhibiting its transcriptional activation functions. During virion assembly, encapsidates the genome by direct interaction with the viral DNA. In Homo sapiens (Human), this protein is Minor capsid protein L2.